Here is a 193-residue protein sequence, read N- to C-terminus: MFKNTFQSGFLSILYSIGSKPLQIWDKKVRNGHIKRITDNDIQSLVLEIEGTNVSTTYITCPADPKKTLGIKLPFLVMIIKNLKKYFTFEVQVLDDKNVRRRFRASNYQSTTRVKPFICTMPMRLDDGWNQIQFNLSDFTRRAYGTNYIETLRVQIHANCRIRRVYFSDRLYSEDELPAEFKLYLPVQNKAKQ.

Belongs to the CFAP20 family. As to quaternary structure, microtubule inner protein component of sperm flagellar doublet microtubules. Expressed in trachea multiciliated cells.

Its subcellular location is the nucleus. The protein resides in the cytoplasm. It localises to the cytoskeleton. It is found in the microtubule organizing center. The protein localises to the centrosome. Its subcellular location is the centriole. The protein resides in the cilium basal body. It localises to the cilium axoneme. It is found in the flagellum axoneme. In terms of biological role, cilium- and flagellum-specific protein that plays a role in axonemal structure organization and motility. Microtubule inner protein (MIP) part of the dynein-decorated doublet microtubules (DMTs) in cilia axoneme, which is required for motile cilia beating. Involved in the regulation of the size and morphology of cilia. Required for axonemal microtubules polyglutamylation. The polypeptide is Cilia- and flagella-associated protein 20 (CFAP20) (Bos taurus (Bovine)).